Here is a 213-residue protein sequence, read N- to C-terminus: Thymidylate kinase (213 aa).

Residue 10 to 17 participates in ATP binding; that stretch reads GLEGAGKT.

It belongs to the thymidylate kinase family.

The enzyme catalyses dTMP + ATP = dTDP + ADP. In terms of biological role, phosphorylation of dTMP to form dTDP in both de novo and salvage pathways of dTTP synthesis. The sequence is that of Thymidylate kinase from Escherichia coli O81 (strain ED1a).